Consider the following 403-residue polypeptide: Phosphopentomutase (403 aa).

Mn(2+)-binding residues include D13, D298, H303, D339, H340, and H351.

This sequence belongs to the phosphopentomutase family. It depends on Mn(2+) as a cofactor.

The protein localises to the cytoplasm. The enzyme catalyses 2-deoxy-alpha-D-ribose 1-phosphate = 2-deoxy-D-ribose 5-phosphate. It catalyses the reaction alpha-D-ribose 1-phosphate = D-ribose 5-phosphate. It participates in carbohydrate degradation; 2-deoxy-D-ribose 1-phosphate degradation; D-glyceraldehyde 3-phosphate and acetaldehyde from 2-deoxy-alpha-D-ribose 1-phosphate: step 1/2. Functionally, isomerase that catalyzes the conversion of deoxy-ribose 1-phosphate (dRib-1-P) and ribose 1-phosphate (Rib-1-P) to deoxy-ribose 5-phosphate (dRib-5-P) and ribose 5-phosphate (Rib-5-P), respectively. The protein is Phosphopentomutase of Streptococcus thermophilus (strain CNRZ 1066).